The chain runs to 325 residues: S-adenosylmethionine carrier 1, chloroplastic/mitochondrial (325 aa).

The N-terminal 38 residues, 1-38, are a transit peptide targeting the chloroplast and mitochondrion; it reads MAPLTLSVDVKSSSATSHDVSKRVMQSSQLKINKGFFA. 3 Solcar repeats span residues 52 to 124, 133 to 215, and 228 to 310; these read RTLF…TKQK, LSAV…LCLG, and ENAL…TKRT. 5 consecutive transmembrane segments (helical) span residues 55-75, 97-117, 132-152, 230-250, and 285-305; these read FEGF…LYPI, YSGL…FVGV, HLSA…ASLI, ALIG…LDVI, and GIGP…GVLE.

It belongs to the mitochondrial carrier (TC 2.A.29) family. Expressed in seedlings, cotyledons, leaves and flowers. Lower levels of expression in stems and roots. Not detected in senescent leaves, petals and pollen grains.

Its subcellular location is the mitochondrion membrane. It localises to the plastid. The protein localises to the chloroplast membrane. Its activity is regulated as follows. Inhibited strongly by tannic acid, bromocresol purple, mercuric chloride, mersalyl, p-hydroxymercuribenzoate, S-adenosylhomocysteine, S-adenosylcysteine and adenosylornithine, and to a lesser extent by N-ethylmaleimide, bathophenanthroline and pyridoxal-5'-P. Functionally, transporter involved in exchange reactions through membranes. Has a low uniporter activity. Specifically mediates the transport of S-adenosylmethionine (SAM) and its closest analogs. Probably involved in the uptake of SAM in exchange for S-adenosylhomocysteine (SAHC), which is produced from SAM in the mitochondrial matrix and plastidial stroma by methyltransferase activities. The polypeptide is S-adenosylmethionine carrier 1, chloroplastic/mitochondrial (SAMC1) (Arabidopsis thaliana (Mouse-ear cress)).